The sequence spans 335 residues: Foldase protein PrsA (335 aa).

The signal sequence occupies residues 1–20 (MKKKIFAGAVTLLSVAVLAA). Cysteine 21 carries N-palmitoyl cysteine lipidation. The S-diacylglycerol cysteine moiety is linked to residue cysteine 21. A PpiC domain is found at 142–239 (TPEVTAQIIK…ASYYIVKLVK (98 aa)). Positions 300-335 (TGSSTSSSSAASSSKTSESSSAAESSSKEASSSAAE) are disordered. Low complexity predominate over residues 302–335 (SSTSSSSAASSSKTSESSSAAESSSKEASSSAAE).

It belongs to the PrsA family.

Its subcellular location is the cell membrane. The enzyme catalyses [protein]-peptidylproline (omega=180) = [protein]-peptidylproline (omega=0). Its function is as follows. Plays a major role in protein secretion by helping the post-translocational extracellular folding of several secreted proteins. The sequence is that of Foldase protein PrsA from Streptococcus sanguinis (strain SK36).